A 161-amino-acid chain; its full sequence is UPF0262 protein mll6455 (161 aa).

This sequence belongs to the UPF0262 family.

The chain is UPF0262 protein mll6455 from Mesorhizobium japonicum (strain LMG 29417 / CECT 9101 / MAFF 303099) (Mesorhizobium loti (strain MAFF 303099)).